Reading from the N-terminus, the 220-residue chain is Adenylate kinase (220 aa).

ATP is bound at residue 10-15; that stretch reads GAGKGT. The segment at 30 to 59 is NMP; the sequence is STGDMLRAAVKAGTPLGVEAKGYMDAGKLV. Residues threonine 31, arginine 36, 57 to 59, 85 to 88, and glutamine 92 contribute to the AMP site; these read KLV and GFPR. Residues 122-159 form an LID region; that stretch reads GRRTHPASGRTYHVKFNPPKVEGHDDVTGEPLIQRDDD. ATP contacts are provided by residues arginine 123 and 132-133; that span reads TY. 2 residues coordinate AMP: arginine 156 and arginine 167. Glycine 206 contributes to the ATP binding site.

The protein belongs to the adenylate kinase family. Monomer.

Its subcellular location is the cytoplasm. It carries out the reaction AMP + ATP = 2 ADP. Its pathway is purine metabolism; AMP biosynthesis via salvage pathway; AMP from ADP: step 1/1. Functionally, catalyzes the reversible transfer of the terminal phosphate group between ATP and AMP. Plays an important role in cellular energy homeostasis and in adenine nucleotide metabolism. In Burkholderia cenocepacia (strain HI2424), this protein is Adenylate kinase.